Here is a 604-residue protein sequence, read N- to C-terminus: Serine/threonine-protein kinase A-Raf (604 aa).

Residues 19–91 enclose the RBD domain; sequence GTVKVYLPNK…DGEELIVEVL (73 aa). The Phorbol-ester/DAG-type zinc-finger motif lies at 98–144; that stretch reads MHNFVRKTFFSLAFCDFCLKFLFHGFRCQTCGYKFHQHCSSKVPTVC. His99, Cys112, Cys115, Cys125, Cys128, His133, Cys136, and Cys144 together coordinate Zn(2+). Phosphoserine is present on residues Ser157 and Ser162. Disordered stretches follow at residues 178–222 and 241–287; these read ELLT…HMVS and TDAA…DEKK. Thr181 bears the Phosphothreonine mark. At Ser186 the chain carries Phosphoserine. Residues 210–222 show a composition bias toward polar residues; that stretch reads IRSTSTPNVHMVS. A compositionally biased stretch (low complexity) spans 252-265; the sequence is PRGSPSPASVSSGR. Phosphoserine occurs at positions 255 and 267. Positions 272 to 287 are enriched in basic and acidic residues; that stretch reads LPAEQRERKSLADEKK. Positions 308–568 constitute a Protein kinase domain; sequence VQLLKRIGTG…PQILATIELL (261 aa). Residues 314–322 and Lys334 contribute to the ATP site; that span reads IGTGSFGTV. The residue at position 316 (Thr316) is a Phosphothreonine. Asp427 serves as the catalytic Proton acceptor.

The protein belongs to the protein kinase superfamily. TKL Ser/Thr protein kinase family. RAF subfamily. As to quaternary structure, interacts with TH1L/NELFD. The cofactor is Zn(2+). Post-translationally, dephosphorylation by the SHOC2-MRAS-PP1c (SMP) complex consisting of SHOC2, GTP-bound M-Ras/MRAS and the catalytic subunit of protein phosphatase 1 (PPP1CA, PPP1CB or PPP1CC); this relieves inactivation and stimulates kinase activity.

The catalysed reaction is L-seryl-[protein] + ATP = O-phospho-L-seryl-[protein] + ADP + H(+). It carries out the reaction L-threonyl-[protein] + ATP = O-phospho-L-threonyl-[protein] + ADP + H(+). Involved in the transduction of mitogenic signals from the cell membrane to the nucleus. May also regulate the TOR signaling cascade. Phosphorylates PFKFB2. In Rattus norvegicus (Rat), this protein is Serine/threonine-protein kinase A-Raf (Araf).